Reading from the N-terminus, the 419-residue chain is Tyrosine--tRNA ligase (419 aa).

Residue Tyr-36 coordinates L-tyrosine. Residues 41–50 (PTGDSMHIGH) carry the 'HIGH' region motif. L-tyrosine-binding residues include Tyr-168 and Gln-172. The short motif at 230–234 (KFGKT) is the 'KMSKS' region element. Lys-233 lines the ATP pocket. An S4 RNA-binding domain is found at 352–419 (KNIVDFLVDA…KKKYFLARVK (68 aa)).

Belongs to the class-I aminoacyl-tRNA synthetase family. TyrS type 1 subfamily. As to quaternary structure, homodimer.

It localises to the cytoplasm. The catalysed reaction is tRNA(Tyr) + L-tyrosine + ATP = L-tyrosyl-tRNA(Tyr) + AMP + diphosphate + H(+). Functionally, catalyzes the attachment of tyrosine to tRNA(Tyr) in a two-step reaction: tyrosine is first activated by ATP to form Tyr-AMP and then transferred to the acceptor end of tRNA(Tyr). In Latilactobacillus sakei subsp. sakei (strain 23K) (Lactobacillus sakei subsp. sakei), this protein is Tyrosine--tRNA ligase.